The following is a 202-amino-acid chain: Small ribosomal subunit protein uS4 (202 aa).

Basic residues predominate over residues 1–13; the sequence is MSRYRGPRLRVTR. The disordered stretch occupies residues 1–42; that stretch reads MSRYRGPRLRVTRRLGELPGLTRKASKKSNPPGQHGQARRKR. The S4 RNA-binding domain occupies 90–152; it reads NRLDNVCFRL…KASKKLVEGN (63 aa).

This sequence belongs to the universal ribosomal protein uS4 family. As to quaternary structure, part of the 30S ribosomal subunit. Contacts protein S5. The interaction surface between S4 and S5 is involved in control of translational fidelity.

One of the primary rRNA binding proteins, it binds directly to 16S rRNA where it nucleates assembly of the body of the 30S subunit. Functionally, with S5 and S12 plays an important role in translational accuracy. The protein is Small ribosomal subunit protein uS4 of Prochlorococcus marinus (strain MIT 9312).